The sequence spans 364 residues: NADH-quinone oxidoreductase subunit H (364 aa).

The next 8 membrane-spanning stretches (helical) occupy residues 15–35 (LLVL…IAFL), 84–104 (AVFI…WAAI), 123–143 (VGVL…IMGG), 169–189 (IGFV…TTIV), 206–226 (YFPL…SALA), 257–277 (LFML…TILF), 302–322 (LSGL…FALV), and 341–361 (IFLP…TFVG).

This sequence belongs to the complex I subunit 1 family. As to quaternary structure, NDH-1 is composed of 14 different subunits. Subunits NuoA, H, J, K, L, M, N constitute the membrane sector of the complex.

The protein localises to the cell inner membrane. It catalyses the reaction a quinone + NADH + 5 H(+)(in) = a quinol + NAD(+) + 4 H(+)(out). In terms of biological role, NDH-1 shuttles electrons from NADH, via FMN and iron-sulfur (Fe-S) centers, to quinones in the respiratory chain. The immediate electron acceptor for the enzyme in this species is believed to be ubiquinone. Couples the redox reaction to proton translocation (for every two electrons transferred, four hydrogen ions are translocated across the cytoplasmic membrane), and thus conserves the redox energy in a proton gradient. This subunit may bind ubiquinone. The polypeptide is NADH-quinone oxidoreductase subunit H (Hyphomonas neptunium (strain ATCC 15444)).